Consider the following 296-residue polypeptide: MTPLMVLVLGPTASGKTSLGIALAQQLDCRVLSIDSRQLYAGMDIGTAKPTRDEQQQARHELLNLSTPDQPINLQQFCSHAQTLIEQEQQRGRPALLVGGSGLYLQALSQGLQPPALPPQTGLRQQLQQLGQSCCHQLLSQADPQAAAKIEPNDPVRTQRALEVLYGTGQTISSQQGRCPPACRVLELGLNPSDLKERIEQRTASLYARGLVAETETLSRRYGADLPLLQTIGYGEALAVLAGRLSESEAQALTSRRTWLFAKRQRTWFRNRHQPLWLNTESALEEALEAIAAARS.

An ATP-binding site is contributed by Gly10–Thr17. Thr12 to Thr17 contributes to the substrate binding site. Residues Asp35 to Gln38 are interaction with substrate tRNA.

It belongs to the IPP transferase family. Monomer. It depends on Mg(2+) as a cofactor.

It carries out the reaction adenosine(37) in tRNA + dimethylallyl diphosphate = N(6)-dimethylallyladenosine(37) in tRNA + diphosphate. In terms of biological role, catalyzes the transfer of a dimethylallyl group onto the adenine at position 37 in tRNAs that read codons beginning with uridine, leading to the formation of N6-(dimethylallyl)adenosine (i(6)A). The polypeptide is tRNA dimethylallyltransferase (Synechococcus sp. (strain RCC307)).